A 261-amino-acid chain; its full sequence is Ribonuclease PH (261 aa).

Phosphate contacts are provided by residues arginine 88 and 126–128 (GTR). The disordered stretch occupies residues 242–261 (PYPGVLPEPKNPEPKKKFGA). The segment covering 251-261 (KNPEPKKKFGA) has biased composition (basic and acidic residues).

Belongs to the RNase PH family. In terms of assembly, homohexameric ring arranged as a trimer of dimers.

The enzyme catalyses tRNA(n+1) + phosphate = tRNA(n) + a ribonucleoside 5'-diphosphate. Phosphorolytic 3'-5' exoribonuclease that plays an important role in tRNA 3'-end maturation. Removes nucleotide residues following the 3'-CCA terminus of tRNAs; can also add nucleotides to the ends of RNA molecules by using nucleoside diphosphates as substrates, but this may not be physiologically important. Probably plays a role in initiation of 16S rRNA degradation (leading to ribosome degradation) during starvation. This Rhodococcus erythropolis (strain PR4 / NBRC 100887) protein is Ribonuclease PH.